Reading from the N-terminus, the 427-residue chain is Adenylosuccinate synthetase (427 aa).

GTP is bound by residues 12–18 and 40–42; these read GDEGKGK and GHT. Aspartate 13 serves as the catalytic Proton acceptor. Mg(2+) contacts are provided by aspartate 13 and glycine 40. Residues 13–16, 38–41, threonine 131, arginine 145, glutamine 226, threonine 241, and arginine 305 contribute to the IMP site; these read DEGK and NAGH. The active-site Proton donor is the histidine 41. 301-307 contributes to the substrate binding site; that stretch reads ATTGRKR. GTP contacts are provided by residues arginine 307, 333–335, and 415–417; these read KLD and SVG.

Belongs to the adenylosuccinate synthetase family. Homodimer. Requires Mg(2+) as cofactor.

Its subcellular location is the cytoplasm. It catalyses the reaction IMP + L-aspartate + GTP = N(6)-(1,2-dicarboxyethyl)-AMP + GDP + phosphate + 2 H(+). It participates in purine metabolism; AMP biosynthesis via de novo pathway; AMP from IMP: step 1/2. Functionally, plays an important role in the de novo pathway of purine nucleotide biosynthesis. Catalyzes the first committed step in the biosynthesis of AMP from IMP. In Oleidesulfovibrio alaskensis (strain ATCC BAA-1058 / DSM 17464 / G20) (Desulfovibrio alaskensis), this protein is Adenylosuccinate synthetase.